The primary structure comprises 223 residues: uncharacterized protein (223 aa).

Residues 29–220 (KQTYKMFKED…AKEILKNIGD (192 aa)) form the Tyr recombinase domain. Catalysis depends on residues arginine 71, lysine 103, histidine 170, arginine 173, and histidine 196. The O-(3'-phospho-DNA)-tyrosine intermediate role is filled by tyrosine 205.

The protein belongs to the 'phage' integrase family.

This is an uncharacterized protein from Methanocaldococcus jannaschii (strain ATCC 43067 / DSM 2661 / JAL-1 / JCM 10045 / NBRC 100440) (Methanococcus jannaschii).